Consider the following 551-residue polypeptide: NAD(P)H-quinone oxidoreductase chain 4 (551 aa).

14 helical membrane passes run 25–45 (FPWL…VPFI), 56–76 (WFAL…YLNG), 111–131 (LILL…PVTF), 133–153 (PKLF…VFAV), 157–177 (LLFF…LAIW), 189–209 (FILY…AMGF), 233–253 (LLCY…VPLH), 264–284 (TAPV…YALM), 298–318 (FAPL…LTSF), 335–355 (MGFV…GAML), 356–376 (QMIS…ATYD), 397–417 (FALW…SGFV), 438–458 (IVID…LLSM), and 485–505 (VYII…PRLM).

Belongs to the complex I subunit 4 family.

The protein localises to the cellular thylakoid membrane. The enzyme catalyses a plastoquinone + NADH + (n+1) H(+)(in) = a plastoquinol + NAD(+) + n H(+)(out). It catalyses the reaction a plastoquinone + NADPH + (n+1) H(+)(in) = a plastoquinol + NADP(+) + n H(+)(out). Its function is as follows. NDH-1 shuttles electrons from NAD(P)H, via FMN and iron-sulfur (Fe-S) centers, to quinones in the respiratory chain. The immediate electron acceptor for the enzyme in this species is believed to be plastoquinone. Couples the redox reaction to proton translocation (for every two electrons transferred, four hydrogen ions are translocated across the cytoplasmic membrane), and thus conserves the redox energy in a proton gradient. This is NAD(P)H-quinone oxidoreductase chain 4 from Synechococcus sp. (strain WH7803).